The chain runs to 91 residues: Small ribosomal subunit protein uS19 (91 aa).

This sequence belongs to the universal ribosomal protein uS19 family.

In terms of biological role, protein S19 forms a complex with S13 that binds strongly to the 16S ribosomal RNA. In Marinomonas sp. (strain MWYL1), this protein is Small ribosomal subunit protein uS19.